Reading from the N-terminus, the 172-residue chain is Exocyst complex component 1-like (172 aa).

The polypeptide is Exocyst complex component 1-like (Mus musculus (Mouse)).